The chain runs to 433 residues: B3 domain-containing protein Os04g0676600 (433 aa).

Disordered regions lie at residues Met1–Gln29 and Phe216–Asn283. The span at Gly13–Phe24 shows a compositional bias: basic and acidic residues. Over residues Phe216–Ala229 the composition is skewed to low complexity. Positions Asp237 to Glu265 are enriched in basic and acidic residues. The segment covering Thr269 to Asn283 has biased composition (polar residues). Residues Leu297–Ile399 constitute a DNA-binding region (TF-B3).

The protein localises to the nucleus. Its function is as follows. Probable transcription regulator that binds specifically to the DNA sequence 5'-CATGC-3' of the IDE1 element found in the promoter of the barley iron deficiency-inducible gene IDS2. This is B3 domain-containing protein Os04g0676600 from Oryza sativa subsp. japonica (Rice).